The primary structure comprises 260 residues: Aliphatic sulfonates import ATP-binding protein SsuB 1 (260 aa).

The ABC transporter domain occupies 29–243 (VRVDGLTRSF…DITDPRFAEL (215 aa)). Residue 61 to 68 (GRSGCGKS) participates in ATP binding.

The protein belongs to the ABC transporter superfamily. Aliphatic sulfonates importer (TC 3.A.1.17.2) family. In terms of assembly, the complex is composed of two ATP-binding proteins (SsuB), two transmembrane proteins (SsuC) and a solute-binding protein (SsuA).

The protein resides in the cell membrane. It carries out the reaction ATP + H2O + aliphatic sulfonate-[sulfonate-binding protein]Side 1 = ADP + phosphate + aliphatic sulfonateSide 2 + [sulfonate-binding protein]Side 1.. Part of the ABC transporter complex SsuABC involved in aliphatic sulfonates import. Responsible for energy coupling to the transport system. The chain is Aliphatic sulfonates import ATP-binding protein SsuB 1 from Streptomyces avermitilis (strain ATCC 31267 / DSM 46492 / JCM 5070 / NBRC 14893 / NCIMB 12804 / NRRL 8165 / MA-4680).